The sequence spans 595 residues: Estrogen receptor (595 aa).

Residues 1-184 (MTMTLHTKAS…AMESAKETRY (184 aa)) are modulating (transactivation AF-1); mediates interaction with MACROD1. An O-linked (GlcNAc) serine glycan is attached at Ser-10. Residues 35-47 (LERPLGEVYVDGS) form a required for interaction with NCOA1 region. Residues 35–174 (LERPLGEVYV…LASTGDKGSM (140 aa)) form an interaction with DDX5; self-association region. A phosphoserine; by CDK2 mark is found at Ser-104 and Ser-106. Phosphoserine is present on Ser-118. A disordered region spans residues 149 to 173 (FYRPTSDNRRQSGRERLASTGDKGS). Basic and acidic residues predominate over residues 154–165 (SDNRRQSGRERL). Ser-167 is subject to Phosphoserine; by CK2. 2 NR C4-type zinc fingers span residues 185-205 (CAVC…CEGC) and 221-245 (CPAT…LRKC). Residues 185-250 (CAVCNDYASG…RLRKCYEVGM (66 aa)) constitute a DNA-binding region (nuclear receptor). Residues 185–310 (CAVCNDYASG…TKKNSPALSL (126 aa)) form a mediates interaction with DNTTIP2 region. The interval 251 to 310 (MKGGIRKDRRGGRMLKHKRQRDEGEGRNEVGSSGDVRASNLWPSPLLIKHTKKNSPALSL) is hinge. A compositionally biased stretch (basic residues) spans 257–269 (KDRRGGRMLKHKR). The disordered stretch occupies residues 257–287 (KDRRGGRMLKHKRQRDEGEGRNEVGSSGDVR). At Arg-260 the chain carries Asymmetric dimethylarginine; by PRMT1. Positions 262–595 (GRMLKHKRQR…EEAGAFPTTV (334 aa)) are interaction with AKAP13. Residues 264–595 (MLKHKRQRDE…EEAGAFPTTV (332 aa)) form a self-association region. The NR LBD domain maps to 311-547 (TADQMVSALL…DLLLEMLDAH (237 aa)). Positions 311–595 (TADQMVSALL…EEAGAFPTTV (285 aa)) are transactivation AF-2. 17beta-estradiol-binding residues include Glu-353 and Arg-394. Cys-447 is lipidated: S-palmitoyl cysteine. His-524 contributes to the 17beta-estradiol binding site. Tyr-537 is subject to Phosphotyrosine; by Tyr-kinases. A glycan (O-linked (GlcNAc) threonine) is linked at Thr-571.

Belongs to the nuclear hormone receptor family. NR3 subfamily. As to quaternary structure, binds DNA as a homodimer. Can form a heterodimer with ESR2. Interacts with coactivator NCOA5. Interacts with PELP1, the interaction is enhanced by 17-beta-estradiol; the interaction increases ESR1 transcriptional activity. Interacts with NCOA7; the interaction is ligand-inducible. Interacts with AKAP13, CUEDC2, HEXIM1, KDM5A, MAP1S, SMARD1, and UBE1C. Interacts with MUC1; the interaction is stimulated by 7 beta-estradiol (E2) and enhances ESR1-mediated transcription. Interacts with DNTTIP2, and UIMC1. Interacts with KMT2D/MLL2. Interacts with ATAD2; the interaction is enhanced by estradiol. Interacts with KIF18A and LDB1. Interacts with RLIM (via its C-terminus). Interacts with MACROD1. Interacts with SH2D4A and PLCG. Interacts with SH2D4A; the interaction blocks binding to PLCG and inhibits estrogen-induced cell proliferation. Interacts with DYNLL1. Interacts with CCDC62; the interaction requires estradiol and appears to enhance the transcription of target genes. Interacts with NR2C1; the interaction prevents homodimerization of ESR1 and suppresses its transcriptional activity and cell growth. Interacts with DNAAF4. Interacts with PRMT2. Interacts with RBFOX2. Interacts with EP300; the interaction is estrogen-dependent and enhanced by CITED1. Interacts with CITED1; the interaction is estrogen-dependent. Interacts with FAM120B, FOXL2, PHB2 and SLC30A9. Interacts with coactivators NCOA3 and NCOA6. Interacts with STK3/MST2 only in the presence of SAV1 and vice-versa. Binds to CSNK1D. Interacts with NCOA2; NCOA2 can interact with ESR1 AF-1 and AF-2 domains simultaneously and mediate their transcriptional synergy. Interacts with DDX5. Interacts with NCOA1; the interaction seems to require a self-association of N-terminal and C-terminal regions. Interacts with ZNF366, DDX17, NFKB1, RELA, SP1 and SP3. Interacts with NRIP1. Interacts with GPER1; the interaction occurs in an estrogen-dependent manner. Interacts with CLOCK and the interaction is stimulated by estrogen. Interacts with TRIP4 (ufmylated); estrogen dependent. Interacts with LMTK3; the interaction phosphorylates ESR1 (in vitro) and protects it against proteasomal degradation. Interacts with CCAR2 (via N-terminus) in a ligand-independent manner. Interacts with ZFHX3. Interacts with SFR1 in a ligand-dependent and -independent manner. Interacts with DCAF13, LATS1 and DCAF1; regulates ESR1 ubiquitination and ubiquitin-mediated proteasomal degradation. Interacts (via DNA-binding domain) with POU4F2 (C-terminus); this interaction increases the estrogen receptor ESR1 transcriptional activity in a DNA- and ligand 17-beta-estradiol-independent manner. Interacts with ESRRB isoform 1. Interacts with UBE3A and WBP2. Interacts with GTF2B. Interacts with RBM39. In the absence of hormonal ligand, interacts with TACC1. Interacts with PI3KR1 or PI3KR2 and PTK2/FAK1. Interacts with SRC. Interacts with BAG1; the interaction is promoted in the absence of estradiol (17-beta-estradiol/E2). Interacts with and ubiquitinated by STUB1; the interaction is promoted in the absence of estradiol (17-beta-estradiol/E2). Interacts with NEDD8. Ubiquitinated; regulated by LATS1 via DCAF1 it leads to ESR1 proteasomal degradation. Deubiquitinated by OTUB1. Ubiquitinated by STUB1/CHIP; in the CA1 hippocampal region following loss of endogenous circulating estradiol (17-beta-estradiol/E2). Ubiquitinated by UBR5, leading to its degradation: UBR5 specifically recognizes and binds ligand-bound ESR1 when it is not associated with coactivators (NCOAs). In presence of NCOAs, the UBR5-degron is not accessible, preventing its ubiquitination and degradation. Post-translationally, phosphorylated by cyclin A/CDK2 and CK1. Phosphorylation probably enhances transcriptional activity. Dephosphorylation at Ser-118 by PPP5C inhibits its transactivation activity. Phosphorylated by LMTK3 (in vitro). In terms of processing, palmitoylated at Cys-447 by ZDHHC7 and ZDHHC21. Palmitoylation is required for plasma membrane targeting and for rapid intracellular signaling via ERK and AKT kinases and cAMP generation, but not for signaling mediated by the nuclear hormone receptor. Dimethylated by PRMT1 at Arg-260. The methylation may favor cytoplasmic localization. Demethylated by JMJD6 at Arg-260.

It localises to the nucleus. It is found in the cytoplasm. The protein localises to the golgi apparatus. Its subcellular location is the cell membrane. Nuclear hormone receptor. The steroid hormones and their receptors are involved in the regulation of eukaryotic gene expression and affect cellular proliferation and differentiation in target tissues. Ligand-dependent nuclear transactivation involves either direct homodimer binding to a palindromic estrogen response element (ERE) sequence or association with other DNA-binding transcription factors, such as AP-1/c-Jun, c-Fos, ATF-2, Sp1 and Sp3, to mediate ERE-independent signaling. Ligand binding induces a conformational change allowing subsequent or combinatorial association with multiprotein coactivator complexes through LXXLL motifs of their respective components. Mutual transrepression occurs between the estrogen receptor (ER) and NF-kappa-B in a cell-type specific manner. Decreases NF-kappa-B DNA-binding activity and inhibits NF-kappa-B-mediated transcription from the IL6 promoter and displace RELA/p65 and associated coregulators from the promoter. Recruited to the NF-kappa-B response element of the CCL2 and IL8 promoters and can displace CREBBP. Present with NF-kappa-B components RELA/p65 and NFKB1/p50 on ERE sequences. Can also act synergistically with NF-kappa-B to activate transcription involving respective recruitment adjacent response elements; the function involves CREBBP. Can activate the transcriptional activity of TFF1. Also mediates membrane-initiated estrogen signaling involving various kinase cascades. Essential for MTA1-mediated transcriptional regulation of BRCA1 and BCAS3. Maintains neuronal survival in response to ischemic reperfusion injury when in the presence of circulating estradiol (17-beta-estradiol/E2). The sequence is that of Estrogen receptor (ESR1) from Felis catus (Cat).